A 320-amino-acid polypeptide reads, in one-letter code: MRQTKTGILLANLGTPDAPTPEAVKRYLKQFLSDRRVVDTSRLLWWPLLRGVILPLRSPRVAKLYASVWMEGGSPLMVYSRQQQQALAQRLPETPVALGMSYGSPSLESAVDELLAEHVDHIVVLPLYPQFSCSTVGAVWDELARILARKRSIPGISFIRDYADNHDYINALANSVRASFAKHGEPDLLLLSYHGIPQRYADEGDDYPQRCRTTTRELASALGMAPEKVMMTFQSRFGREPWLMPYTDETLKMLGEKGVGHIQVMCPGFAADCLETLEEIAEQNREVFLGAGGKKYEYIPALNATPEHIEMMANLVAAYR.

Residues H194 and E275 each contribute to the Fe cation site.

Belongs to the ferrochelatase family. In terms of assembly, monomer.

The protein resides in the cytoplasm. The catalysed reaction is heme b + 2 H(+) = protoporphyrin IX + Fe(2+). It functions in the pathway porphyrin-containing compound metabolism; protoheme biosynthesis; protoheme from protoporphyrin-IX: step 1/1. Catalyzes the ferrous insertion into protoporphyrin IX. The chain is Ferrochelatase from Escherichia coli O157:H7 (strain EC4115 / EHEC).